The chain runs to 796 residues: Probable phosphoketolase (796 aa).

It belongs to the XFP family. Thiamine diphosphate serves as cofactor.

The protein is Probable phosphoketolase of Streptomyces coelicolor (strain ATCC BAA-471 / A3(2) / M145).